Here is an 84-residue protein sequence, read N- to C-terminus: Toxin Tf2 (84 aa).

An N-terminal signal peptide occupies residues 1–20 (MKRFLLFISILMMIGTIVVG). Residues 21 to 83 (KEGYAMDHEG…VWDYATNKCG (63 aa)) enclose the LCN-type CS-alpha/beta domain. Disulfide bonds link cysteine 31-cysteine 82, cysteine 35-cysteine 58, cysteine 43-cysteine 63, and cysteine 47-cysteine 65. Cysteine 82 is subject to Cysteine amide.

Belongs to the long (4 C-C) scorpion toxin superfamily. Sodium channel inhibitor family. Beta subfamily. Post-translationally, contains 4 disulfide bonds. Expressed by the venom gland.

The protein resides in the secreted. Its function is as follows. Beta toxins bind voltage-independently at site-4 of sodium channels (Nav) and shift the voltage of activation toward more negative potentials thereby affecting sodium channel activation and promoting spontaneous and repetitive firing. This toxin is active against hNav1.3/SCN3A. This Tityus fasciolatus (Central Brazilian scorpion) protein is Toxin Tf2.